A 574-amino-acid polypeptide reads, in one-letter code: Secreted lipase 1 (574 aa).

The signal sequence occupies residues 1–17; it reads MKLSLVPIFALLSTAFA. A disulfide bridge links Cys95 with Cys132. Residue Ser244 is the Acyl-ester intermediate of the active site. A disulfide bond links Cys303 and Cys312. N-linked (GlcNAc...) asparagine glycosylation occurs at Asn323. Glu376 (charge relay system) is an active-site residue. N-linked (GlcNAc...) asparagine glycosylation occurs at Asn386. The active-site Charge relay system is His489. Asn524 is a glycosylation site (N-linked (GlcNAc...) asparagine).

The protein belongs to the type-B carboxylesterase/lipase family.

The protein resides in the secreted. The catalysed reaction is a carboxylic ester + H2O = an alcohol + a carboxylate + H(+). Its function is as follows. Secreted lipase that allows the use of hydrolyzed lipids as carbon sources. Has highest activity with methyl umbelliferyl oleate (C18:1), whereas much lower activities are obtained with the respective esters of palmitate (C16:0) and stearate (C18:0) (24% and 12% of the activity obtained with umbelliferyl oleate, respectively). Hydrolyzes 1- and 3-positioned ester bonds in preference to 2-positioned ester bonds. The production rate of monoglycerides is lower than that of diacylglycerides. Seems not required for the penetration of intact host tissue. The polypeptide is Secreted lipase 1 (Botryotinia fuckeliana (strain B05.10) (Noble rot fungus)).